The primary structure comprises 401 residues: uncharacterized protein (401 aa).

7 helical membrane passes run 44 to 64, 69 to 89, 99 to 119, 130 to 150, 201 to 221, 246 to 266, and 286 to 306; these read LKYT…LVFI, LYSF…FVLL, LVFN…LIIF, ILST…SIIP, FIYA…LYIL, ILFY…SFVA, and LFFS…GTVV.

The protein localises to the cell membrane. This is an uncharacterized protein from Mycoplasma pneumoniae (strain ATCC 29342 / M129 / Subtype 1) (Mycoplasmoides pneumoniae).